A 540-amino-acid polypeptide reads, in one-letter code: Hexose transporter HXT14 (540 aa).

The Cytoplasmic segment spans residues 1–56 (MTAQIPYQHSSGYISHFHNNELDAGRGRDYNVTIKYLDDKEENIEGQAAKISHNAS). Residues 57–76 (LHIPVLLCLVISLGGFIFGW) traverse the membrane as a helical segment. Residues 77–119 (DIGTIGGMTNMVSFQEKFGTTNIIHDDETIFVSTKKLTDLQIG) are Extracellular-facing. The helical transmembrane segment at 120–140 (LIISIFNISCGVGALTLSKIG) threads the bilayer. The Cytoplasmic portion of the chain corresponds to 141–146 (DWIGRK). Residues 147 to 167 (GGIWFALVVYCIGITIQILSY) form a helical membrane-spanning segment. The Extracellular portion of the chain corresponds to 168–177 (GRWYFLTLGR). A helical membrane pass occupies residues 178 to 198 (AVTGIGVGVTTVLVPMFLSEN). Over 199–204 (SPLKIR) the chain is Cytoplasmic. A helical transmembrane segment spans residues 205–225 (GSMVSTYQLIVTFGILMGNIL). Residues 226-243 (NFICERCYKDPTQNIAWQ) lie on the Extracellular side of the membrane. A helical transmembrane segment spans residues 244–264 (LPLFLGYIWAIIIGMSLVYVP). Topologically, residues 265 to 357 (ESPQYLAKIK…IMAFQQLSGI (93 aa)) are cytoplasmic. A helical membrane pass occupies residues 358–374 (NYFFYYGTSVFKGVGIK). The Extracellular portion of the chain corresponds to 375 to 380 (DPYITS). A helical membrane pass occupies residues 381–398 (IILSSVNFLSTILGIYYV). Residues 399–405 (EKWGHKT) are Cytoplasmic-facing. A helical transmembrane segment spans residues 406 to 426 (CLLYGSTNLLFYMMTYATVGT). Topologically, residues 427–440 (FGRETDFSNIVLII) are extracellular. The chain crosses the membrane as a helical span at residues 441–461 (VTCCFIFWFAITLGPVTFVLV). The Cytoplasmic segment spans residues 462–478 (SELFPLRTRAISMAICT). The chain crosses the membrane as a helical span at residues 479 to 499 (FINWMFNFLISLLTPMIVSKI). A topological domain (extracellular) is located at residue D500. A helical membrane pass occupies residues 501 to 521 (FKLGYIFAACLLALIIFSWIL). The Cytoplasmic portion of the chain corresponds to 522–540 (VPETRKKNEQEINKIFEPE).

Belongs to the major facilitator superfamily. Sugar transporter (TC 2.A.1.1) family.

The protein localises to the membrane. In terms of biological role, probable glucose transporter. In Saccharomyces cerevisiae (strain ATCC 204508 / S288c) (Baker's yeast), this protein is Hexose transporter HXT14 (HXT14).